The chain runs to 306 residues: Recombination-associated protein RdgC (306 aa).

The protein belongs to the RdgC family.

The protein resides in the cytoplasm. The protein localises to the nucleoid. Functionally, may be involved in recombination. This is Recombination-associated protein RdgC from Pseudomonas entomophila (strain L48).